We begin with the raw amino-acid sequence, 122 residues long: Large ribosomal subunit protein uL18 (122 aa).

Belongs to the universal ribosomal protein uL18 family. In terms of assembly, part of the 50S ribosomal subunit; part of the 5S rRNA/L5/L18/L25 subcomplex. Contacts the 5S and 23S rRNAs.

This is one of the proteins that bind and probably mediate the attachment of the 5S RNA into the large ribosomal subunit, where it forms part of the central protuberance. The sequence is that of Large ribosomal subunit protein uL18 from Agathobacter rectalis (strain ATCC 33656 / DSM 3377 / JCM 17463 / KCTC 5835 / VPI 0990) (Eubacterium rectale).